Reading from the N-terminus, the 442-residue chain is 5-methylthioadenosine/S-adenosylhomocysteine deaminase (442 aa).

Zn(2+) is bound by residues His72 and His74. Residues Glu101 and His194 each coordinate substrate. His221 serves as a coordination point for Zn(2+). Glu224 and Asp309 together coordinate substrate. Position 309 (Asp309) interacts with Zn(2+).

This sequence belongs to the metallo-dependent hydrolases superfamily. MTA/SAH deaminase family. It depends on Zn(2+) as a cofactor.

It catalyses the reaction S-adenosyl-L-homocysteine + H2O + H(+) = S-inosyl-L-homocysteine + NH4(+). The catalysed reaction is S-methyl-5'-thioadenosine + H2O + H(+) = S-methyl-5'-thioinosine + NH4(+). Functionally, catalyzes the deamination of 5-methylthioadenosine and S-adenosyl-L-homocysteine into 5-methylthioinosine and S-inosyl-L-homocysteine, respectively. Is also able to deaminate adenosine. The chain is 5-methylthioadenosine/S-adenosylhomocysteine deaminase from Teredinibacter turnerae (strain ATCC 39867 / T7901).